The primary structure comprises 546 residues: Chaperonin GroEL 4 (546 aa).

ATP contacts are provided by residues 30–33 (TLGP), lysine 51, 87–91 (DGTTT), glycine 415, and aspartate 495. Residues 524-546 (APKDTPAAGQPGGPGAGGPGLDF) are disordered. A compositionally biased stretch (gly residues) spans 533-546 (QPGGPGAGGPGLDF).

It belongs to the chaperonin (HSP60) family. Forms a cylinder of 14 subunits composed of two heptameric rings stacked back-to-back. Interacts with the co-chaperonin GroES.

The protein localises to the cytoplasm. The enzyme catalyses ATP + H2O + a folded polypeptide = ADP + phosphate + an unfolded polypeptide.. Functionally, together with its co-chaperonin GroES, plays an essential role in assisting protein folding. The GroEL-GroES system forms a nano-cage that allows encapsulation of the non-native substrate proteins and provides a physical environment optimized to promote and accelerate protein folding. The polypeptide is Chaperonin GroEL 4 (Paraburkholderia xenovorans (strain LB400)).